We begin with the raw amino-acid sequence, 58 residues long: Temporin-1Th (58 aa).

An N-terminal signal peptide occupies residues 1–22; it reads MFTLKKSLLLLFFLGTINLSLC. Residues 23–46 constitute a propeptide that is removed on maturation; it reads EEERNAEEERRDEPDERDVQVEKR. Residues 25–46 are disordered; sequence ERNAEEERRDEPDERDVQVEKR. L56 is modified (leucine amide).

Expressed by the skin glands.

Its subcellular location is the secreted. In terms of biological role, antimicrobial peptide that renders both the outer and inner membrane of bacteria permeable to hydrophobic substances of low molecular mass. The protein is Temporin-1Th of Rana temporaria (European common frog).